The sequence spans 466 residues: Cysteine--tRNA ligase (466 aa).

Position 27 (Cys-27) interacts with Zn(2+). The 'HIGH' region signature appears at 29–39 (PTVYNYIHIGN). Residues Cys-207, His-232, and Glu-236 each coordinate Zn(2+). The short motif at 264–268 (KMSKS) is the 'KMSKS' region element. Lys-267 provides a ligand contact to ATP.

Belongs to the class-I aminoacyl-tRNA synthetase family. Monomer. Requires Zn(2+) as cofactor.

It localises to the cytoplasm. The catalysed reaction is tRNA(Cys) + L-cysteine + ATP = L-cysteinyl-tRNA(Cys) + AMP + diphosphate. This Thermoanaerobacter pseudethanolicus (strain ATCC 33223 / 39E) (Clostridium thermohydrosulfuricum) protein is Cysteine--tRNA ligase.